We begin with the raw amino-acid sequence, 306 residues long: Polyphosphate kinase PPK2B (306 aa).

It belongs to the polyphosphate kinase 2 (PPK2) family. Class I subfamily. In terms of assembly, homotetramer. The cofactor is Mn(2+).

The catalysed reaction is [phosphate](n) + ATP = [phosphate](n+1) + ADP. It carries out the reaction [phosphate](n) + GTP = [phosphate](n+1) + GDP. In terms of biological role, catalyzes the synthesis of polyP from ATP or GTP. Can also use inorganic polyphosphate (polyP) as a donor to convert ADP to ATP, but the activity is 10-fold higher in vitro for polyP synthesis than for ATP formation. The sequence is that of Polyphosphate kinase PPK2B from Corynebacterium glutamicum (strain ATCC 13032 / DSM 20300 / JCM 1318 / BCRC 11384 / CCUG 27702 / LMG 3730 / NBRC 12168 / NCIMB 10025 / NRRL B-2784 / 534).